The primary structure comprises 183 residues: ATP synthase subunit delta (183 aa).

The protein belongs to the ATPase delta chain family. F-type ATPases have 2 components, F(1) - the catalytic core - and F(0) - the membrane proton channel. F(1) has five subunits: alpha(3), beta(3), gamma(1), delta(1), epsilon(1). F(0) has three main subunits: a(1), b(2) and c(10-14). The alpha and beta chains form an alternating ring which encloses part of the gamma chain. F(1) is attached to F(0) by a central stalk formed by the gamma and epsilon chains, while a peripheral stalk is formed by the delta and b chains.

The protein resides in the cell inner membrane. F(1)F(0) ATP synthase produces ATP from ADP in the presence of a proton or sodium gradient. F-type ATPases consist of two structural domains, F(1) containing the extramembraneous catalytic core and F(0) containing the membrane proton channel, linked together by a central stalk and a peripheral stalk. During catalysis, ATP synthesis in the catalytic domain of F(1) is coupled via a rotary mechanism of the central stalk subunits to proton translocation. Functionally, this protein is part of the stalk that links CF(0) to CF(1). It either transmits conformational changes from CF(0) to CF(1) or is implicated in proton conduction. The polypeptide is ATP synthase subunit delta (Rickettsia typhi (strain ATCC VR-144 / Wilmington)).